The primary structure comprises 122 residues: uncharacterized protein (122 aa).

This is an uncharacterized protein from Haemophilus phage HP1 (strain HP1c1) (Bacteriophage HP1).